A 472-amino-acid chain; its full sequence is 3-isopropylmalate dehydratase large subunit (472 aa).

Residues Cys-350, Cys-411, and Cys-414 each coordinate [4Fe-4S] cluster.

It belongs to the aconitase/IPM isomerase family. LeuC type 1 subfamily. Heterodimer of LeuC and LeuD. Requires [4Fe-4S] cluster as cofactor.

It catalyses the reaction (2R,3S)-3-isopropylmalate = (2S)-2-isopropylmalate. It functions in the pathway amino-acid biosynthesis; L-leucine biosynthesis; L-leucine from 3-methyl-2-oxobutanoate: step 2/4. Its function is as follows. Catalyzes the isomerization between 2-isopropylmalate and 3-isopropylmalate, via the formation of 2-isopropylmaleate. This Alcanivorax borkumensis (strain ATCC 700651 / DSM 11573 / NCIMB 13689 / SK2) protein is 3-isopropylmalate dehydratase large subunit.